The sequence spans 417 residues: UDP-N-acetylglucosamine 1-carboxyvinyltransferase (417 aa).

K22–N23 contributes to the phosphoenolpyruvate binding site. R93 is a binding site for UDP-N-acetyl-alpha-D-glucosamine. C117 functions as the Proton donor in the catalytic mechanism. A 2-(S-cysteinyl)pyruvic acid O-phosphothioketal modification is found at C117. UDP-N-acetyl-alpha-D-glucosamine is bound by residues D304 and I326.

Belongs to the EPSP synthase family. MurA subfamily.

The protein localises to the cytoplasm. The enzyme catalyses phosphoenolpyruvate + UDP-N-acetyl-alpha-D-glucosamine = UDP-N-acetyl-3-O-(1-carboxyvinyl)-alpha-D-glucosamine + phosphate. The protein operates within cell wall biogenesis; peptidoglycan biosynthesis. Its function is as follows. Cell wall formation. Adds enolpyruvyl to UDP-N-acetylglucosamine. In Neisseria gonorrhoeae (strain ATCC 700825 / FA 1090), this protein is UDP-N-acetylglucosamine 1-carboxyvinyltransferase.